The primary structure comprises 273 residues: Putative methyltransferase Cher3 (273 aa).

Residues 1 to 273 (MTSERNTDIE…VKPQRIFRKS (273 aa)) form the CheR-type methyltransferase domain. S-adenosyl-L-methionine contacts are provided by residues Ser-76, Arg-80, Glu-114, Asp-137, 199–200 (SL), and 215–216 (RN).

The chain is Putative methyltransferase Cher3 (cheR3) from Pseudomonas putida (strain ATCC 47054 / DSM 6125 / CFBP 8728 / NCIMB 11950 / KT2440).